Reading from the N-terminus, the 222-residue chain is N-(5'-phosphoribosyl)anthranilate isomerase (222 aa).

It belongs to the TrpF family.

The enzyme catalyses N-(5-phospho-beta-D-ribosyl)anthranilate = 1-(2-carboxyphenylamino)-1-deoxy-D-ribulose 5-phosphate. The protein operates within amino-acid biosynthesis; L-tryptophan biosynthesis; L-tryptophan from chorismate: step 3/5. The polypeptide is N-(5'-phosphoribosyl)anthranilate isomerase (Xanthomonas campestris pv. campestris (strain 8004)).